We begin with the raw amino-acid sequence, 187 residues long: GTP cyclohydrolase 1 (187 aa).

3 residues coordinate Zn(2+): cysteine 78, histidine 81, and cysteine 150.

The protein belongs to the GTP cyclohydrolase I family. As to quaternary structure, homomer.

It carries out the reaction GTP + H2O = 7,8-dihydroneopterin 3'-triphosphate + formate + H(+). Its pathway is cofactor biosynthesis; 7,8-dihydroneopterin triphosphate biosynthesis; 7,8-dihydroneopterin triphosphate from GTP: step 1/1. In Brevibacillus brevis (strain 47 / JCM 6285 / NBRC 100599), this protein is GTP cyclohydrolase 1.